Here is a 470-residue protein sequence, read N- to C-terminus: Auxin transporter-like protein 3 (470 aa).

At 1–57 the chain is on the cytoplasmic side; it reads MAAEKIETVVAGNYLEMEREEENISGNKKSSTKTKLSNFFWHGGSVYDAWFSCASNQ. A helical transmembrane segment spans residues 58–75; it reads VAQVLLTLPYSFSQLGMM. Over 76 to 77 the chain is Extracellular; sequence SG. A helical membrane pass occupies residues 78–98; it reads ILFQLFYGLMGSWTAYLISVL. Residues 99–134 are Cytoplasmic-facing; the sequence is YVEYRTRKEREKFDFRNHVIQWFEVLDGLLGKHWRN. Residues 135–155 form a helical membrane-spanning segment; it reads LGLIFNCTFLLFGSVIQLIAC. Residues 156–170 lie on the Extracellular side of the membrane; the sequence is ASNIYYINDKLDKRT. Residues 171–191 form a helical membrane-spanning segment; that stretch reads WTYIFGACCATTVFIPSFHNY. Residue arginine 192 is a topological domain, cytoplasmic. Residues 193-213 traverse the membrane as a helical segment; sequence IWSFLGLAMTTYTSWYLTIAS. Residues 214 to 230 are Extracellular-facing; sequence LLHGQAEDVKHSGPTTM. A helical membrane pass occupies residues 231 to 251; it reads VLYFTGATNILYTFGGHAVTV. Residues 252-264 lie on the Cytoplasmic side of the membrane; the sequence is EIMHAMWKPQKFK. A helical membrane pass occupies residues 265–285; it reads AIYLLATIYVLTLTLPSASAV. Over 286 to 312 the chain is Extracellular; that stretch reads YWAFGDKLLTHSNALSLLPKTGFRDTA. A helical transmembrane segment spans residues 313–333; sequence VILMLIHQFITFGFASTPLYF. Topologically, residues 334–354 are cytoplasmic; that stretch reads VWEKLIGVHETKSMFKRAMAR. A helical transmembrane segment spans residues 355 to 375; sequence LPVVVPIWFLAIIFPFFGPIN. Residue serine 376 is a topological domain, extracellular. The chain crosses the membrane as a helical span at residues 377–397; sequence AVGSLLVSFTVYIIPALAHML. The Cytoplasmic portion of the chain corresponds to 398-426; that stretch reads TFAPAPSRENAVERPPRVVGGWMGTYCIN. Residues 427–447 form a helical membrane-spanning segment; that stretch reads IFVVVWVFVVGFGFGGWASMV. Over 448 to 470 the chain is Extracellular; the sequence is NFVRQIDTFGLFTKCYQCPPHKP.

The protein belongs to the amino acid/polyamine transporter 2 family. Amino acid/auxin permease (AAAP) (TC 2.A.18.1) subfamily.

Its subcellular location is the cell membrane. Carrier protein involved in proton-driven auxin influx. Mediates the formation of auxin gradient from developing leaves (site of auxin biosynthesis) to tips by contributing to the loading of auxin in vascular tissues and facilitating acropetal (base to tip) auxin transport within inner tissues of the root apex, and basipetal (tip to base) auxin transport within outer tissues of the root apex. The polypeptide is Auxin transporter-like protein 3 (LAX3) (Arabidopsis thaliana (Mouse-ear cress)).